Consider the following 699-residue polypeptide: Elongation factor G (699 aa).

The tr-type G domain occupies 8 to 283; the sequence is EHIRNIGICA…AVVDFLPSPI (276 aa). Residues 17–24, 81–85, and 135–138 contribute to the GTP site; these read AHIDAGKT, DTPGH, and NKMD.

It belongs to the TRAFAC class translation factor GTPase superfamily. Classic translation factor GTPase family. EF-G/EF-2 subfamily.

The protein resides in the cytoplasm. Catalyzes the GTP-dependent ribosomal translocation step during translation elongation. During this step, the ribosome changes from the pre-translocational (PRE) to the post-translocational (POST) state as the newly formed A-site-bound peptidyl-tRNA and P-site-bound deacylated tRNA move to the P and E sites, respectively. Catalyzes the coordinated movement of the two tRNA molecules, the mRNA and conformational changes in the ribosome. This is Elongation factor G from Rickettsia africae (strain ESF-5).